A 211-amino-acid polypeptide reads, in one-letter code: MGKHRRNNSNATRKAVAASAVALGATAAIASPAQAAEVVVPGTGISVDIAGIETTPGLNNVPGIDQWIPSLSSQAAPTAYAAVIDAPAAEAQAAPAASTGQAIVDAARTKIGSPYGWGATGPNAFDCSGLTSWAYSQVGKSIPRTSQAQAAQGTPVAYSDLQAGDIVAFYSGATHVGIYSGHGTVIHALNSSTPLSEHSLDYMPFHSAVRF.

The N-terminal stretch at 1-35 (MGKHRRNNSNATRKAVAASAVALGATAAIASPAQA) is a signal peptide. The 115-residue stretch at 97-211 (ASTGQAIVDA…YMPFHSAVRF (115 aa)) folds into the NlpC/P60 domain. Catalysis depends on Cys127, which acts as the Nucleophile. Residue His175 is the Proton acceptor of the active site. His187 is a catalytic residue.

Belongs to the peptidase C40 family.

It localises to the secreted. The chain is Probable endopeptidase cgR_2070 from Corynebacterium glutamicum (strain R).